The sequence spans 609 residues: Phosphoenolpyruvate carboxykinase [GTP] (609 aa).

Substrate-binding positions include R81 and 220–222; that span reads YGG. K229 and H249 together coordinate Mn(2+). S271 provides a ligand contact to substrate. A GTP-binding site is contributed by 272-277; that stretch reads ACGKTN. C273 is a catalytic residue. D296 contacts Mn(2+). 387-389 provides a ligand contact to substrate; the sequence is NSR. Residues R389, R420, and 515–518 each bind GTP; that span reads FGEN.

The protein belongs to the phosphoenolpyruvate carboxykinase [GTP] family. Monomer. It depends on Mn(2+) as a cofactor.

It localises to the cytoplasm. It catalyses the reaction oxaloacetate + GTP = phosphoenolpyruvate + GDP + CO2. It participates in carbohydrate biosynthesis; gluconeogenesis. In terms of biological role, catalyzes the conversion of oxaloacetate (OAA) to phosphoenolpyruvate (PEP), the rate-limiting step in the metabolic pathway that produces glucose from lactate and other precursors derived from the citric acid cycle. This is Phosphoenolpyruvate carboxykinase [GTP] from Mycobacterium ulcerans (strain Agy99).